Here is a 391-residue protein sequence, read N- to C-terminus: Ferrochelatase (391 aa).

Fe cation is bound by residues His196 and Glu281.

Belongs to the ferrochelatase family.

Its subcellular location is the cytoplasm. The catalysed reaction is heme b + 2 H(+) = protoporphyrin IX + Fe(2+). It participates in porphyrin-containing compound metabolism; protoheme biosynthesis; protoheme from protoporphyrin-IX: step 1/1. Catalyzes the ferrous insertion into protoporphyrin IX. The protein is Ferrochelatase of Prochlorococcus marinus (strain SARG / CCMP1375 / SS120).